The sequence spans 769 residues: Cap-specific mRNA (nucleoside-2'-O-)-methyltransferase 2 (769 aa).

The 214-residue stretch at E109–G322 folds into the Adrift-type SAM-dependent 2'-O-MTase domain. K117 is a catalytic residue. S-adenosyl-L-methionine is bound by residues G148, W167, and D235. Residue D235 is part of the active site. K275 functions as the Proton acceptor in the catalytic mechanism.

It localises to the nucleus. The protein resides in the cytoplasm. It carries out the reaction a 5'-end (N(7)-methyl 5'-triphosphoguanosine)-(2'-O-methyl-ribonucleoside)-(ribonucleotide) in mRNA + S-adenosyl-L-methionine = a 5'-end (N(7)-methyl 5'-triphosphoguanosine)-(2'-O-methyl-ribonucleoside)-(2'-O-methyl-ribonucleotide) in mRNA + S-adenosyl-L-homocysteine + H(+). In terms of biological role, S-adenosyl-L-methionine-dependent methyltransferase that mediates mRNA cap2 2'-O-ribose methylation to the 5'-cap structure of mRNAs. Methylates the ribose of the second nucleotide of a m(7)GpppG-capped mRNA and small nuclear RNA (snRNA) (cap0) to produce m(7)GpppRmpNm (cap2). Recognizes a guanosine cap on RNA independently of its N(7) methylation status. Display cap2 methylation on both cap0 and cap1. Displays a preference for cap1 RNAs. The chain is Cap-specific mRNA (nucleoside-2'-O-)-methyltransferase 2 (CMTR2) from Pongo abelii (Sumatran orangutan).